The sequence spans 82 residues: Photosystem I iron-sulfur center (82 aa).

2 4Fe-4S ferredoxin-type domains span residues 2–31 (SHTV…MVPW) and 37–68 (GQIA…VRVY). Cys-11, Cys-14, Cys-17, Cys-21, Cys-48, Cys-51, Cys-54, and Cys-58 together coordinate [4Fe-4S] cluster.

As to quaternary structure, the eukaryotic PSI reaction center is composed of at least 11 subunits. The cofactor is [4Fe-4S] cluster.

Its subcellular location is the plastid. The protein resides in the chloroplast thylakoid membrane. It carries out the reaction reduced [plastocyanin] + hnu + oxidized [2Fe-2S]-[ferredoxin] = oxidized [plastocyanin] + reduced [2Fe-2S]-[ferredoxin]. Its function is as follows. Apoprotein for the two 4Fe-4S centers FA and FB of photosystem I (PSI); essential for photochemical activity. FB is the terminal electron acceptor of PSI, donating electrons to ferredoxin. The C-terminus interacts with PsaA/B/D and helps assemble the protein into the PSI complex. Required for binding of PsaD and PsaE to PSI. PSI is a plastocyanin/cytochrome c6-ferredoxin oxidoreductase, converting photonic excitation into a charge separation, which transfers an electron from the donor P700 chlorophyll pair to the spectroscopically characterized acceptors A0, A1, FX, FA and FB in turn. The sequence is that of Photosystem I iron-sulfur center from Trieres chinensis (Marine centric diatom).